The sequence spans 357 residues: MDRFYSLSHSSIDFHFKQTPRDFVVEEVPLYEFCGEGEHLILFVRKKGISTLELVSMIAKYLGIKNKEIGYAGLKDKHAMTKQYISLHKKYEEKMDTFEHEDVKILSKTYHNNKIRIGHLNGNKFYIKLKKVNPTSALKIDEALKNIASFGMPNYFGYQRFGTDGNNHIDGELIAKGEKKERNPKVRQLLISAYQSHLFNLWLSRRLEINSLIQNFDVKELEPLLNIPQDELLKMKSQKHPFKLISGDIMEHYPYGRLFEFIGEAHDFDRFNAKDISVTGLLCGKKAKHSTGLSREIEKDFDDEINEDGARRYAWVFPKDIDGRYKDEEAQYELNFYLPKGCYATVLIEEIAKRKIV.

Aspartate 76 serves as the catalytic Nucleophile. The TRUD domain maps to 151 to 331 (GMPNYFGYQR…DGRYKDEEAQ (181 aa)).

This sequence belongs to the pseudouridine synthase TruD family.

It carries out the reaction uridine(13) in tRNA = pseudouridine(13) in tRNA. Functionally, responsible for synthesis of pseudouridine from uracil-13 in transfer RNAs. The protein is tRNA pseudouridine synthase D of Sulfurimonas denitrificans (strain ATCC 33889 / DSM 1251) (Thiomicrospira denitrificans (strain ATCC 33889 / DSM 1251)).